The sequence spans 165 residues: Nucleotide-binding protein A9601_05361 (165 aa).

The protein belongs to the YajQ family.

Functionally, nucleotide-binding protein. This Prochlorococcus marinus (strain AS9601) protein is Nucleotide-binding protein A9601_05361.